We begin with the raw amino-acid sequence, 314 residues long: Thymidylate synthase (314 aa).

Residues R21 and R176–R177 each bind dUMP. C196 acts as the Nucleophile in catalysis. DUMP-binding positions include R216–D219, N227, and H257–Y259. D219 contacts (6R)-5,10-methylene-5,6,7,8-tetrahydrofolate. S313 lines the (6R)-5,10-methylene-5,6,7,8-tetrahydrofolate pocket.

It belongs to the thymidylate synthase family. Bacterial-type ThyA subfamily. As to quaternary structure, homodimer.

Its subcellular location is the cytoplasm. The catalysed reaction is dUMP + (6R)-5,10-methylene-5,6,7,8-tetrahydrofolate = 7,8-dihydrofolate + dTMP. It participates in pyrimidine metabolism; dTTP biosynthesis. In terms of biological role, catalyzes the reductive methylation of 2'-deoxyuridine-5'-monophosphate (dUMP) to 2'-deoxythymidine-5'-monophosphate (dTMP) while utilizing 5,10-methylenetetrahydrofolate (mTHF) as the methyl donor and reductant in the reaction, yielding dihydrofolate (DHF) as a by-product. This enzymatic reaction provides an intracellular de novo source of dTMP, an essential precursor for DNA biosynthesis. This Listeria innocua serovar 6a (strain ATCC BAA-680 / CLIP 11262) protein is Thymidylate synthase.